The following is a 431-amino-acid chain: Putative transcription factor R429 (431 aa).

Residues 28-95 are a coiled coil; that stretch reads NKFENMSKAL…SIENCSESLD (68 aa). Positions 142-187 are disordered; sequence SQQENSSESNNDIVKNGTGGSTSKRKKIQPSNRCSGSKTGKVTETK. Over residues 143 to 152 the composition is skewed to low complexity; that stretch reads QQENSSESNN. Residues 170–181 are compositionally biased toward polar residues; that stretch reads QPSNRCSGSKTG. A zinc finger spans residues 218–241; the sequence is CSVPDCDGEKILNQNDGYMVCKKC.

The protein belongs to the nucleo-cytoplasmic large DNA viruses (NCLDVs) VLTF-3 family.

Its function is as follows. Putative transcription factor. This chain is Putative transcription factor R429, found in Acanthamoeba polyphaga (Amoeba).